The chain runs to 139 residues: D-ribose pyranase (139 aa).

Catalysis depends on His20, which acts as the Proton donor. Residues Asp28, His106, and 128–130 (YAN) contribute to the substrate site.

This sequence belongs to the RbsD / FucU family. RbsD subfamily. Homodecamer.

The protein localises to the cytoplasm. The enzyme catalyses beta-D-ribopyranose = beta-D-ribofuranose. It participates in carbohydrate metabolism; D-ribose degradation; D-ribose 5-phosphate from beta-D-ribopyranose: step 1/2. Its function is as follows. Catalyzes the interconversion of beta-pyran and beta-furan forms of D-ribose. The chain is D-ribose pyranase from Salmonella paratyphi B (strain ATCC BAA-1250 / SPB7).